A 208-amino-acid chain; its full sequence is NAD(P)H-hydrate epimerase (208 aa).

Positions 11 to 208 (MRAKDQFTIN…VIVADDMGTY (198 aa)) constitute a YjeF N-terminal domain. 59–63 (NNGGD) provides a ligand contact to (6S)-NADPHX. Asn-60 and Asp-122 together coordinate K(+). (6S)-NADPHX contacts are provided by residues 126–132 (GIGIDRP), Tyr-137, and Asp-155. Ser-158 lines the K(+) pocket.

It belongs to the NnrE/AIBP family. K(+) is required as a cofactor.

It carries out the reaction (6R)-NADHX = (6S)-NADHX. The enzyme catalyses (6R)-NADPHX = (6S)-NADPHX. Catalyzes the epimerization of the S- and R-forms of NAD(P)HX, a damaged form of NAD(P)H that is a result of enzymatic or heat-dependent hydration. This is a prerequisite for the S-specific NAD(P)H-hydrate dehydratase to allow the repair of both epimers of NAD(P)HX. In Limosilactobacillus fermentum (strain NBRC 3956 / LMG 18251) (Lactobacillus fermentum), this protein is NAD(P)H-hydrate epimerase.